The primary structure comprises 118 residues: Ribonuclease P protein component (118 aa).

Belongs to the RnpA family. In terms of assembly, consists of a catalytic RNA component (M1 or rnpB) and a protein subunit.

The enzyme catalyses Endonucleolytic cleavage of RNA, removing 5'-extranucleotides from tRNA precursor.. RNaseP catalyzes the removal of the 5'-leader sequence from pre-tRNA to produce the mature 5'-terminus. It can also cleave other RNA substrates such as 4.5S RNA. The protein component plays an auxiliary but essential role in vivo by binding to the 5'-leader sequence and broadening the substrate specificity of the ribozyme. The polypeptide is Ribonuclease P protein component (Rickettsia conorii (strain ATCC VR-613 / Malish 7)).